A 118-amino-acid chain; its full sequence is Holin-like protein CidA 2 (118 aa).

Transmembrane regions (helical) follow at residues 4-26, 33-52, 62-84, and 91-113; these read VTLL…IQGV, GSLI…VLPL, LIVF…GSFL, and IFLL…SQLL.

This sequence belongs to the CidA/LrgA family. CidA subfamily.

It localises to the cell membrane. Its function is as follows. Increases the activity of extracellular murein hydrolases possibly by mediating their export via hole formation. Inhibited by the antiholin-like proteins LrgAB. In an unstressed cell, the LrgAB products probably inhibit the function of the CidA protein. When a cell is stressed by the addition of antibiotics or by other factors in the environment, CidA possibly oligomerizes within the bacterial cell membrane, creating lesions that disrupt the proton motive force, which in turn results in loss of cell viability. These lesions are also hypothesized to regulate the subsequent cell lysis by either allowing the murein hydrolases access to the cell wall substrate and/or regulating their activity by a possible change in the cell wall pH that results from loss of membrane potential. This chain is Holin-like protein CidA 2 (cidA2), found in Bacillus cereus (strain ATCC 14579 / DSM 31 / CCUG 7414 / JCM 2152 / NBRC 15305 / NCIMB 9373 / NCTC 2599 / NRRL B-3711).